The primary structure comprises 316 residues: MTANKPLLVVIVGPTAVGKTELSIELAKKIGGEIISGDSIQVYRGMDIGTAKVTKEEMQGVPHYLIDILDPDEPFSAFAFKERAQKLITEITERGHIPIIAGGTGLYIQSLIYDYPFDKEEISPEKEQEVKEKMAQLESLSNEALHDYLKSFDPDSAEDIHPNNRKRVLRAVEYYLKTKKLLSYRKKTVQFTENYDTLLIGVEMSREILYQRINCRVDSMLEHGLLQEVEQLMNQGYTSCQSMQAIGYKELIPAVNHEIPINQAVDKLKQHSRNYAKRQMTWFKNKMDVQWFDRAQTSLPLILDEITARIKKRRES.

13–20 (GPTAVGKT) is a binding site for ATP. Residue 15 to 20 (TAVGKT) participates in substrate binding. The segment at 38–41 (DSIQ) is interaction with substrate tRNA.

This sequence belongs to the IPP transferase family. As to quaternary structure, monomer. It depends on Mg(2+) as a cofactor.

The enzyme catalyses adenosine(37) in tRNA + dimethylallyl diphosphate = N(6)-dimethylallyladenosine(37) in tRNA + diphosphate. In terms of biological role, catalyzes the transfer of a dimethylallyl group onto the adenine at position 37 in tRNAs that read codons beginning with uridine, leading to the formation of N6-(dimethylallyl)adenosine (i(6)A). This is tRNA dimethylallyltransferase from Staphylococcus carnosus (strain TM300).